Consider the following 201-residue polypeptide: MYEYIRGQFQGISKDYVVIELNNIGYKIFTSGNTMSNMPKVGDEVLLYLEQIVREDFIGLYGFTTREELEMFKLLLSINGVGAKAALSLLSISTVNNLKYAIMMGDEKHITRAPGIGKKTAQRIILELKDKLKPDELTSEEGQLIEGINDNSDYSFNINETLSALMALGYTEKEAQKALEKVDKTLSIENMIKESLKLLMR.

The segment at 1-64 is domain I; it reads MYEYIRGQFQ…EDFIGLYGFT (64 aa). The domain II stretch occupies residues 65-143; the sequence is TREELEMFKL…PDELTSEEGQ (79 aa). The flexible linker stretch occupies residues 144-152; that stretch reads LIEGINDNS. The segment at 153-201 is domain III; that stretch reads DYSFNINETLSALMALGYTEKEAQKALEKVDKTLSIENMIKESLKLLMR.

The protein belongs to the RuvA family. As to quaternary structure, homotetramer. Forms an RuvA(8)-RuvB(12)-Holliday junction (HJ) complex. HJ DNA is sandwiched between 2 RuvA tetramers; dsDNA enters through RuvA and exits via RuvB. An RuvB hexamer assembles on each DNA strand where it exits the tetramer. Each RuvB hexamer is contacted by two RuvA subunits (via domain III) on 2 adjacent RuvB subunits; this complex drives branch migration. In the full resolvosome a probable DNA-RuvA(4)-RuvB(12)-RuvC(2) complex forms which resolves the HJ.

The protein localises to the cytoplasm. Functionally, the RuvA-RuvB-RuvC complex processes Holliday junction (HJ) DNA during genetic recombination and DNA repair, while the RuvA-RuvB complex plays an important role in the rescue of blocked DNA replication forks via replication fork reversal (RFR). RuvA specifically binds to HJ cruciform DNA, conferring on it an open structure. The RuvB hexamer acts as an ATP-dependent pump, pulling dsDNA into and through the RuvAB complex. HJ branch migration allows RuvC to scan DNA until it finds its consensus sequence, where it cleaves and resolves the cruciform DNA. The sequence is that of Holliday junction branch migration complex subunit RuvA from Clostridium perfringens (strain 13 / Type A).